We begin with the raw amino-acid sequence, 245 residues long: Syntaxin-61 (245 aa).

The Cytoplasmic portion of the chain corresponds to 1–224 (MSSAQDPFYI…VMKKAGAKGQ (224 aa)). A t-SNARE coiled-coil homology domain is found at 153–215 (MLLIKQQDEE…EFVQKKVGMV (63 aa)). Residues 225-245 (MMMICFLLVLFIILFVLVFLT) traverse the membrane as a helical; Anchor for type IV membrane protein segment.

Belongs to the syntaxin family. In terms of assembly, interacts with VTI12 and either SYP41, SYP42 or SYP51 in the trans-Golgi network or with VTI11 and SYP51 in the prevacuolar compartment to form t-SNARE complexes. Core constituent of the SNARE complex required for membrane fusion at the trans-Golgi network. Also observed in the SYP121-complex and cellulose synthases. Colocalizes with PIP2-7 and SYP121 in trafficking vesicles and at the plasma membrane. Interacts with SYP121 and PIP2-7. Expressed in root, leaf, stem, flower and silique, but not in hypocotyl or young leaf. Strong expression in the vasculature and in guard cells of the leaf epidermis.

The protein resides in the golgi apparatus. It localises to the trans-Golgi network membrane. Its subcellular location is the prevacuolar compartment membrane. Vesicle trafficking protein that functions in the secretory pathway; the fusion of phospholipid vesicles containing SYP61 and VTI12 is triggered by YKT61 and YKT62. Together with VTI12, required for membrane fusion. Involved in osmotic stress tolerance and in abscisic acid (ABA) regulation of stomatal responses. Plays a role in the exocytic trafficking of cellulose synthases (CESAs) and the transport of cell wall components to the plasma membrane. Together with SYP121, regulates the post-Golgi trafficking of the aquaporin PIP2-7 to the plasma membrane, thus modulating cell membrane water permeability. The sequence is that of Syntaxin-61 from Arabidopsis thaliana (Mouse-ear cress).